The sequence spans 527 residues: Protein PLASTID TRANSCRIPTIONALLY ACTIVE 12, chloroplastic (527 aa).

The transit peptide at 1–30 (MASISTTTWLYRGQVCTDSGKSSNCIVQRR) directs the protein to the chloroplast. Residues 1–115 (MASISTTTWL…ASIPGEDYWP (115 aa)) form a PHYA-interacting region 1 (PIR1) region. The tract at residues 89–188 (SYMDSTSGKL…NDSSDGFVTY (100 aa)) is disordered. A compositionally biased stretch (acidic residues) spans 163-181 (TNDEVSDSEDSSEEEENDS). Short sequence motifs (nuclear localization signal) lie at residues 204–211 (DKKLGRPH) and 235–242 (WRKPEKEQ). The PHYA-interacting region 2 (PIR2) stretch occupies residues 252–352 (DVETVFLKAM…EMFSHQTDRE (101 aa)). A compositionally biased stretch (acidic residues) spans 458–471 (GENDDDEDDADVEK). The disordered stretch occupies residues 458 to 527 (GENDDDEDDA…LMDFEEETDP (70 aa)). The segment covering 485–504 (ETPELRTAKPKPKKEGRMSL) has biased composition (basic and acidic residues). Residues 506 to 527 (EAVDDAENLTDFLMDFEEETDP) are compositionally biased toward acidic residues. The short motif at 512–520 (ENLTDFLMD) is the Required and sufficient for transcriptional transactivation activity and to trigger PIF proteins degradation element.

Component of the transcriptionally active chromosome (TAC) complexes. Interacts with PTAC14 and PTAC7. Binds directly to PTAC6/PAP8 in the nucleus. Interacts with MED14. Binds to SL1/MTERF3. Binds to photoactivated phytochromes (e.g. PHYA and PHYB) via their photosensory domains; these interactions stimulate its light-mediated accumulation. Associates, via its N-terminal region, with phytochrome-interacting factors (PIFs) including PIF1, PIF3, PIF4, PIF5, PIF6, BHLH72/PIF7, UNE10/PIF8 and PIL1. Binds to RAD4. Associates with MRL7/RCB. As to expression, mostly expressed in cotyledons, leaves, stems and flowers, but barely in roots.

It is found in the plastid. The protein localises to the chloroplast. The protein resides in the nucleus. Its function is as follows. Involved in plastid gene expression. Acidic transcriptional coactivator necessary for the transactivation of many PIFs target genes (class B genes), particularly during the regulation of hypocotyl growth. Plays dual opposite roles in regulating hypocotyl growth, preventing it in red and far-red conditions, but promoting it otherwise. Required in the nucleus for the initiation of photomorphogenesis mediated by phytochromes (PHYs) (e.g. PHYA and PHYB) by mediating PHYs localization to photobodies, especially in response to red and far-red light, and implicating phytochrome nuclear bodies as sites of proteolysis for PHYs and PIFs proteins (e.g. PIF1 and PIF3). Acts downstream of PHYs and upstream of DET1. Involved in UV tolerance in both roots and hypocotyls, specifically in dark conditions. Element of a PIF4/HMR/MED14-dependent thermoresponsive process; acts as a PIF4 transcriptional coactivator to trigger the thermoresponsive growth-relevant genes (e.g. mainly involved in biosynthesis and signaling of the phytohormone auxin) and promote warm-temperature-dependent (e.g. 27 degrees Celsius) PIF4 and MED14 stabilization and accumulation, being more prominently involved in long days (LD) and continuous red light (Rc) than in short days (SD), thus modulating warm temperature elicitation of MED14-dependent thermomorphogenesis (e.g. hypocotyl elongation). The polypeptide is Protein PLASTID TRANSCRIPTIONALLY ACTIVE 12, chloroplastic (Arabidopsis thaliana (Mouse-ear cress)).